The sequence spans 291 residues: Elongation factor Ts (291 aa).

An involved in Mg(2+) ion dislocation from EF-Tu region spans residues 80–83 (TDFV).

It belongs to the EF-Ts family.

Its subcellular location is the cytoplasm. In terms of biological role, associates with the EF-Tu.GDP complex and induces the exchange of GDP to GTP. It remains bound to the aminoacyl-tRNA.EF-Tu.GTP complex up to the GTP hydrolysis stage on the ribosome. This is Elongation factor Ts from Limosilactobacillus reuteri (strain DSM 20016) (Lactobacillus reuteri).